The following is a 431-amino-acid chain: Serine--tRNA ligase (431 aa).

236-238 is a binding site for L-serine; it reads TAE. 267 to 269 serves as a coordination point for ATP; it reads RSE. Glu290 lines the L-serine pocket. Residue 354 to 357 coordinates ATP; that stretch reads EISS. Ser389 serves as a coordination point for L-serine.

The protein belongs to the class-II aminoacyl-tRNA synthetase family. Type-1 seryl-tRNA synthetase subfamily. As to quaternary structure, homodimer. The tRNA molecule binds across the dimer.

Its subcellular location is the cytoplasm. It catalyses the reaction tRNA(Ser) + L-serine + ATP = L-seryl-tRNA(Ser) + AMP + diphosphate + H(+). It carries out the reaction tRNA(Sec) + L-serine + ATP = L-seryl-tRNA(Sec) + AMP + diphosphate + H(+). It participates in aminoacyl-tRNA biosynthesis; selenocysteinyl-tRNA(Sec) biosynthesis; L-seryl-tRNA(Sec) from L-serine and tRNA(Sec): step 1/1. Catalyzes the attachment of serine to tRNA(Ser). Is also able to aminoacylate tRNA(Sec) with serine, to form the misacylated tRNA L-seryl-tRNA(Sec), which will be further converted into selenocysteinyl-tRNA(Sec). The polypeptide is Serine--tRNA ligase (Janthinobacterium sp. (strain Marseille) (Minibacterium massiliensis)).